Reading from the N-terminus, the 141-residue chain is 3-hydroxyacyl-[acyl-carrier-protein] dehydratase FabZ (141 aa).

Residue His-47 is part of the active site.

Belongs to the thioester dehydratase family. FabZ subfamily.

It localises to the cytoplasm. The enzyme catalyses a (3R)-hydroxyacyl-[ACP] = a (2E)-enoyl-[ACP] + H2O. Functionally, involved in unsaturated fatty acids biosynthesis. Catalyzes the dehydration of short chain beta-hydroxyacyl-ACPs and long chain saturated and unsaturated beta-hydroxyacyl-ACPs. This Caldanaerobacter subterraneus subsp. tengcongensis (strain DSM 15242 / JCM 11007 / NBRC 100824 / MB4) (Thermoanaerobacter tengcongensis) protein is 3-hydroxyacyl-[acyl-carrier-protein] dehydratase FabZ.